The chain runs to 399 residues: Glutathione-independent formaldehyde dehydrogenase (399 aa).

Cys-47 provides a ligand contact to Zn(2+). NAD(+)-binding residues include Gly-48, Ser-49, and His-52. Residues His-68, Cys-98, Cys-101, Cys-104, Cys-112, and Asp-170 each coordinate Zn(2+). Positions 198, 218, 223, 263, 268, 300, 338, and 339 each coordinate NAD(+).

This sequence belongs to the zinc-containing alcohol dehydrogenase family. In terms of assembly, homotetramer. Requires Zn(2+) as cofactor.

The catalysed reaction is formaldehyde + NAD(+) + H2O = formate + NADH + 2 H(+). It carries out the reaction acetaldehyde + NAD(+) + H2O = acetate + NADH + 2 H(+). Dehydrogenase that catalyzes the NAD(+)-dependent oxidation of formaldehyde and acetaldehyde. Shows no detectable activity against either aldehydes with longer carbon chains or ethanol. This is Glutathione-independent formaldehyde dehydrogenase from Pseudomonas aeruginosa (strain LESB58).